An 87-amino-acid polypeptide reads, in one-letter code: Mu-conotoxin cal12b (87 aa).

The N-terminal stretch at M1 to L19 is a signal peptide. Residues I20–R42 constitute a propeptide that is removed on maturation. Intrachain disulfides connect C45–C58, C53–C70, C60–C75, and C69–C81. W59 is subject to 6'-bromotryptophan. Position 65 is a 4-hydroxyproline (P65). 6'-bromotryptophan is present on residues W79 and W80. Residue P82 is modified to 4-hydroxyproline. Residue W86 is modified to 6'-bromotryptophan.

Expressed by the venom duct.

The protein resides in the secreted. Mu-conotoxins block voltage-gated sodium channels. This toxin reversibly blocks voltage-gated sodium channel in cephalopods (tested on squid giant-fiber-lobe neurons) with an inhibitor constant (Ki) of 15 nmol/l, with no alteration in the voltage dependence of sodium conductance or on the kinetics of inactivation. Has no effect on sodium channels of the two gastropod S.luhuanus and A.californica (which are not natural prey). In Californiconus californicus (California cone), this protein is Mu-conotoxin cal12b.